A 314-amino-acid chain; its full sequence is RNA 2'-O-methyltransferase FBLL1 (314 aa).

The span at Met1 to Gly59 shows a compositional bias: gly residues. Positions Met1 to Val82 are disordered. Position 7 is an omega-N-methylarginine (Arg7). The segment covering Arg64 to Gly77 has biased composition (basic residues). Residues Thr166–Thr167, Glu185–Phe186, Asp210–Ala211, and Asp230–Gln233 each bind S-adenosyl-L-methionine.

It belongs to the methyltransferase superfamily. Fibrillarin family. Component of a box C/D small nucleolar ribonucleoprotein (snoRNP) complex composed of FBLL1, SNU13/NHP2L1, NOP56 and NOP58 and a guide snoRNA which mediates 2'-hydroxyl ribose methylation in RNAs.

It is found in the nucleus. Its subcellular location is the nucleolus. It catalyses the reaction a ribonucleotide in RNA + S-adenosyl-L-methionine = a 2'-O-methylribonucleotide in RNA + S-adenosyl-L-homocysteine + H(+). In terms of biological role, S-adenosyl-L-methionine-dependent RNA methyltransferase that catalyzes 2'-hydroxyl ribose methylation in RNAs. Functions as part of box C/D small nucleolar ribonucleoprotein (snoRNP) complexes, where guide snoRNAs ensure methylation specificity through base pairing with RNA substrates. Exhibits broad substrate specificity, methylating multiple sites on ribosomal RNAs (rRNAs) and messenger RNAs (mRNAs) depending on the guide snoRNA incorporated in the complex. Specifically expressed in brain, it regulates the expression of GAP43 by stabilizing its mRNA through methylation and thereby plays an indirect role in neuronal differentiation. The sequence is that of RNA 2'-O-methyltransferase FBLL1 from Mus musculus (Mouse).